A 117-amino-acid chain; its full sequence is 5-hydroxyisourate hydrolase (117 aa).

Substrate is bound by residues H7, R45, and Y114.

Belongs to the transthyretin family. 5-hydroxyisourate hydrolase subfamily. In terms of assembly, homotetramer.

The catalysed reaction is 5-hydroxyisourate + H2O = 5-hydroxy-2-oxo-4-ureido-2,5-dihydro-1H-imidazole-5-carboxylate + H(+). Its function is as follows. Catalyzes the hydrolysis of 5-hydroxyisourate (HIU) to 2-oxo-4-hydroxy-4-carboxy-5-ureidoimidazoline (OHCU). In Ralstonia nicotianae (strain ATCC BAA-1114 / GMI1000) (Ralstonia solanacearum), this protein is 5-hydroxyisourate hydrolase.